Reading from the N-terminus, the 295-residue chain is Putative S-adenosyl-L-methionine-dependent methyltransferase Mvan_0910 (295 aa).

S-adenosyl-L-methionine contacts are provided by residues D126 and 155–156 (DL).

The protein belongs to the UPF0677 family.

In terms of biological role, exhibits S-adenosyl-L-methionine-dependent methyltransferase activity. This Mycolicibacterium vanbaalenii (strain DSM 7251 / JCM 13017 / BCRC 16820 / KCTC 9966 / NRRL B-24157 / PYR-1) (Mycobacterium vanbaalenii) protein is Putative S-adenosyl-L-methionine-dependent methyltransferase Mvan_0910.